The sequence spans 315 residues: L-lactate dehydrogenase (315 aa).

NAD(+)-binding positions include Val-17, Asp-38, Lys-43, Tyr-69, and 83-84 (GA). 2 residues coordinate substrate: Gln-86 and Arg-92. Residues Ser-105, 122-124 (ATN), and Ser-147 each bind NAD(+). 124–127 (NPVD) provides a ligand contact to substrate. 152 to 155 (DTAR) serves as a coordination point for substrate. The beta-D-fructose 1,6-bisphosphate site is built by Arg-157 and His-172. His-179 (proton acceptor) is an active-site residue. Tyr-223 carries the phosphotyrosine modification. Thr-232 serves as a coordination point for substrate.

This sequence belongs to the LDH/MDH superfamily. LDH family. As to quaternary structure, homotetramer.

It is found in the cytoplasm. The enzyme catalyses (S)-lactate + NAD(+) = pyruvate + NADH + H(+). It functions in the pathway fermentation; pyruvate fermentation to lactate; (S)-lactate from pyruvate: step 1/1. Allosterically activated by fructose 1,6-bisphosphate (FBP). Functionally, catalyzes the conversion of lactate to pyruvate. In Macrococcus caseolyticus (strain JCSC5402) (Macrococcoides caseolyticum), this protein is L-lactate dehydrogenase.